The sequence spans 939 residues: Trafficking kinesin-binding protein 1 (939 aa).

The region spanning 46–353 (LEEQLPHYKL…EELKNLRNKT (308 aa)) is the HAP1 N-terminal domain. The stretch at 106–354 (KTYNDIDAVT…ELKNLRNKTM (249 aa)) forms a coiled coil. The interaction with HGS stretch occupies residues 359 to 509 (RYHSLGLFPM…SLRRENYLSE (151 aa)). Serine 444 carries O-linked (GlcNAc) serine glycosylation. A disordered region spans residues 472 to 492 (LGNEDHNKKPGTPGTPGSHDL). Residues 490–524 (HDLETALRRLSLRRENYLSERRFFEEEQERKLREL) are a coiled coil. At serine 534 the chain carries Phosphoserine. The segment at 655 to 669 (PGKCMSQTNSTFTFT) is interaction with OGT. Residues serine 677 and serine 716 are each glycosylated (O-linked (GlcNAc) serine). A phosphoserine mark is found at serine 716 and serine 905.

Belongs to the milton family. As to quaternary structure, interacts with RHOT1 and RHOT2. Found in a complex with KIF5B, OGT, RHOT1 and RHOT2. Interacts with HGS. Interacts with GABRA1. Interacts with KIF5C. Interacts with OGT; stable interaction is not required for glycosylation of this protein by OGT. Isoform 1 interacts with OGT. Post-translationally, O-glycosylated. Glycosylated by OGT; glycosylation in response to increased extracellular glucose levels is required for and leads to regulation of mitochondrial motility by OGT. In terms of tissue distribution, widely expressed with the greatest expression in brain, liver and kidney. Detected throughout the CNS, including the cortex, hippocamps, thalamus and various subcortical nuclei of the forebrain and midbrain, the granule of Purkinje layers of the cerebellum and the gray matter of the spinal cord. High level detected in lower moter neurons (at protein level).

The protein localises to the cytoplasm. The protein resides in the nucleus. It localises to the mitochondrion. Its subcellular location is the early endosome. It is found in the endosome. The protein localises to the mitochondrion membrane. The protein resides in the cell cortex. Involved in the regulation of endosome-to-lysosome trafficking, including endocytic trafficking of EGF-EGFR complexes and GABA-A receptors. Involved in mitochondrial motility. When O-glycosylated, abolishes mitochondrial motility. Crucial for recruiting OGT to the mitochondrial surface of neuronal processes. TRAK1 and RHOT form an essential protein complex that links KIF5 to mitochondria for light chain-independent, anterograde transport of mitochondria. The sequence is that of Trafficking kinesin-binding protein 1 (Trak1) from Mus musculus (Mouse).